We begin with the raw amino-acid sequence, 355 residues long: Protein RecA (355 aa).

78-85 lines the ATP pocket; the sequence is GPESSGKT.

Belongs to the RecA family.

It is found in the cytoplasm. Functionally, can catalyze the hydrolysis of ATP in the presence of single-stranded DNA, the ATP-dependent uptake of single-stranded DNA by duplex DNA, and the ATP-dependent hybridization of homologous single-stranded DNAs. It interacts with LexA causing its activation and leading to its autocatalytic cleavage. The polypeptide is Protein RecA (Rhodobacter capsulatus (Rhodopseudomonas capsulata)).